A 325-amino-acid chain; its full sequence is 8-oxo-dGDP phosphatase NUDT18 (325 aa).

The Nudix hydrolase domain occupies 38-163 (NVCYIVGAVI…DILSLIDAGL (126 aa)). Position 55 (L55) interacts with Mg(2+). A Nudix box motif is present at residues 73–94 (GRMEECESILEALQREVREEAG).

This sequence belongs to the Nudix hydrolase family. Requires Mn(2+) as cofactor. It depends on Mg(2+) as a cofactor.

The catalysed reaction is 8-oxo-dGDP + H2O = 8-oxo-dGMP + phosphate + H(+). The enzyme catalyses 8-oxo-dADP + H2O = 8-oxo-dAMP + phosphate + H(+). It carries out the reaction 2-oxo-dADP + H2O = 2-oxo-dAMP + phosphate + H(+). It catalyses the reaction 8-oxo-GDP + H2O = 8-oxo-GMP + phosphate + H(+). Its function is as follows. Mediates the hydrolysis of oxidized nucleoside diphosphate derivatives. Hydrolyzes 8-oxo-7,8-dihydroguanine (8-oxo-Gua)-containing deoxyribo- and ribonucleoside diphosphates to the monophosphates. Hydrolyzes 8-oxo-dGDP and 8-oxo-GDP with the same efficiencies. Also hydrolyzes 8-OH-dADP and 2-OH-dADP. Exhibited no or minimal hydrolysis activity against 8-oxo-dGTP, 8-oxo-GTP, dGTP, GTP, dGDP and GDP. Probably removes oxidized guanine nucleotides from both the DNA and RNA precursor pools. The sequence is that of 8-oxo-dGDP phosphatase NUDT18 (nudt18) from Danio rerio (Zebrafish).